A 221-amino-acid polypeptide reads, in one-letter code: Flavin-dependent thymidylate synthase (221 aa).

The ThyX domain occupies 9 to 209 (GFVKLLDHMG…PWTYESFIRY (201 aa)). FAD is bound by residues Ser-55, 78–80 (RHR), and Glu-86. Residues 75-78 (QWMR), 86-90 (ELSGR), and Arg-148 each bind dUMP. A ThyX motif motif is present at residues 78–88 (RHRIASYNELS). FAD-binding positions include 164–166 (NAR) and Asn-170. Arg-175 contacts dUMP. Arg-175 acts as the Involved in ionization of N3 of dUMP, leading to its activation in catalysis.

This sequence belongs to the thymidylate synthase ThyX family. In terms of assembly, homotetramer. It depends on FAD as a cofactor.

The enzyme catalyses dUMP + (6R)-5,10-methylene-5,6,7,8-tetrahydrofolate + NADPH + H(+) = dTMP + (6S)-5,6,7,8-tetrahydrofolate + NADP(+). Its pathway is pyrimidine metabolism; dTTP biosynthesis. In terms of biological role, catalyzes the reductive methylation of 2'-deoxyuridine-5'-monophosphate (dUMP) to 2'-deoxythymidine-5'-monophosphate (dTMP) while utilizing 5,10-methylenetetrahydrofolate (mTHF) as the methyl donor, and NADPH and FADH(2) as the reductant. This Pseudothermotoga lettingae (strain ATCC BAA-301 / DSM 14385 / NBRC 107922 / TMO) (Thermotoga lettingae) protein is Flavin-dependent thymidylate synthase.